Here is a 314-residue protein sequence, read N- to C-terminus: tRNA pseudouridine synthase B (314 aa).

His-43 serves as a coordination point for substrate. The Nucleophile role is filled by Asp-48. 3 residues coordinate substrate: Tyr-76, Tyr-179, and Leu-200.

Belongs to the pseudouridine synthase TruB family. Type 1 subfamily.

The enzyme catalyses uridine(55) in tRNA = pseudouridine(55) in tRNA. In terms of biological role, responsible for synthesis of pseudouridine from uracil-55 in the psi GC loop of transfer RNAs. The sequence is that of tRNA pseudouridine synthase B from Escherichia coli O139:H28 (strain E24377A / ETEC).